The sequence spans 105 residues: Large ribosomal subunit protein uL24 (105 aa).

Residues 40–61 (RIKKHTPQSANERGASSGGIVT) are disordered.

It belongs to the universal ribosomal protein uL24 family. Part of the 50S ribosomal subunit.

In terms of biological role, one of two assembly initiator proteins, it binds directly to the 5'-end of the 23S rRNA, where it nucleates assembly of the 50S subunit. One of the proteins that surrounds the polypeptide exit tunnel on the outside of the subunit. This chain is Large ribosomal subunit protein uL24, found in Mycobacteroides abscessus (strain ATCC 19977 / DSM 44196 / CCUG 20993 / CIP 104536 / JCM 13569 / NCTC 13031 / TMC 1543 / L948) (Mycobacterium abscessus).